Reading from the N-terminus, the 270-residue chain is MLLGSVPQLDRVAVQLGPFPVYWYGIIIGTGVLLGLWLATREGERLGIPKDTFVDLVLIAVPIAILFARMYYVIFEWEYYAQNPSQIINIRQGGLAIHGGLIGAVITGILFAKRRGVSFWKLADIAAPSILLGQAIGRWGNFMNQEAHGDEVTRQFLEGLHLPDFIINQMYIEGVYYHPTFLYESLWNFVGVILLLALRKVNLRRGELFFTYLIWYSVGRFFVEGLRTDSLMLGPLRIAQVMSIGLVVISIIFIIVRRKMGQADKRYSEN.

4 helical membrane passes run 19–39 (FPVY…LWLA), 56–76 (LVLI…VIFE), 92–112 (QGGL…ILFA), and 116–136 (GVSF…GQAI). Residue arginine 138 participates in a 1,2-diacyl-sn-glycero-3-phospho-(1'-sn-glycerol) binding. 3 consecutive transmembrane segments (helical) span residues 178 to 198 (HPTF…LLAL), 206 to 226 (GELF…VEGL), and 236 to 256 (LRIA…FIIV).

This sequence belongs to the Lgt family.

It localises to the cell membrane. The catalysed reaction is L-cysteinyl-[prolipoprotein] + a 1,2-diacyl-sn-glycero-3-phospho-(1'-sn-glycerol) = an S-1,2-diacyl-sn-glyceryl-L-cysteinyl-[prolipoprotein] + sn-glycerol 1-phosphate + H(+). Its pathway is protein modification; lipoprotein biosynthesis (diacylglyceryl transfer). Catalyzes the transfer of the diacylglyceryl group from phosphatidylglycerol to the sulfhydryl group of the N-terminal cysteine of a prolipoprotein, the first step in the formation of mature lipoproteins. This Bacillus cereus (strain G9842) protein is Phosphatidylglycerol--prolipoprotein diacylglyceryl transferase.